The primary structure comprises 494 residues: Probable malate:quinone oxidoreductase (494 aa).

The protein belongs to the MQO family. It depends on FAD as a cofactor.

It catalyses the reaction (S)-malate + a quinone = a quinol + oxaloacetate. The protein operates within carbohydrate metabolism; tricarboxylic acid cycle; oxaloacetate from (S)-malate (quinone route): step 1/1. This chain is Probable malate:quinone oxidoreductase, found in Kocuria rhizophila (strain ATCC 9341 / DSM 348 / NBRC 103217 / DC2201).